The primary structure comprises 362 residues: Histidinol-phosphate aminotransferase (362 aa).

Residue Lys211 is modified to N6-(pyridoxal phosphate)lysine.

This sequence belongs to the class-II pyridoxal-phosphate-dependent aminotransferase family. Histidinol-phosphate aminotransferase subfamily. Homodimer. It depends on pyridoxal 5'-phosphate as a cofactor.

The enzyme catalyses L-histidinol phosphate + 2-oxoglutarate = 3-(imidazol-4-yl)-2-oxopropyl phosphate + L-glutamate. It functions in the pathway amino-acid biosynthesis; L-histidine biosynthesis; L-histidine from 5-phospho-alpha-D-ribose 1-diphosphate: step 7/9. In Serratia proteamaculans (strain 568), this protein is Histidinol-phosphate aminotransferase.